Reading from the N-terminus, the 257-residue chain is Inositol diphosphatase DSP2 (257 aa).

Residues 66-251 (NFSMVDNGIF…VSGLKHTPMS (186 aa)) form the Tyrosine-protein phosphatase domain. 1D-myo-inositol hexakisphosphate-binding residues include isoleucine 168 and lysine 172. Cysteine 192 functions as the Phosphocysteine intermediate in the catalytic mechanism.

The protein belongs to the protein-tyrosine phosphatase family. Atypical dual-specificity phosphatase Siw14-like subfamily. As to expression, expressed in roots, leaves, stems, flowers and siliques.

The catalysed reaction is 5-diphospho-1D-myo-inositol 1,2,3,4,6-pentakisphosphate + H2O = 1D-myo-inositol hexakisphosphate + phosphate + H(+). It carries out the reaction 1,5-bis(diphospho)-1D-myo-inositol 2,3,4,6-tetrakisphosphate + H2O = 1-diphospho-1D-myo-inositol 2,3,4,5,6-pentakisphosphate + phosphate + 2 H(+). The enzyme catalyses 3,5-bis(diphospho)-1D-myo-inositol 1,2,4,6-tetrakisphosphate + H2O = 3-diphospho-1D-myo-inositol 1,2,4,5,6-pentakisphosphate + phosphate + 2 H(+). It catalyses the reaction 6-diphospho-1D-myo-inositol pentakisphosphate + H2O = 1D-myo-inositol hexakisphosphate + phosphate + H(+). Cleaves the beta-phosphate at the 5-position of soluble inositol pyrophosphates. Has highest activity on 5-diphosphoinositol 1,2,3,4,6-pentakisphosphate (5-InsP(7)), 1,5-bis-diphosphoinositol 2,3,4,6-tetrakisphosphate (1,5-InsP(8)) and 3,5-InsP(8). Possesses phosphotyrosine phosphatase activity in vitro. Dephosphorylates the phosphoinositides PI(3,5)P2. Hydrolyzes para-nitrophenyl phosphate and O-methylfluorescein phosphate in vitro. The chain is Inositol diphosphatase DSP2 from Arabidopsis thaliana (Mouse-ear cress).